Consider the following 503-residue polypeptide: Transforming protein rel polyprotein (503 aa).

The RHD domain maps to 16-305 (PYIEIFEQPR…GNKAKRQRST (290 aa)). Ser275 carries the post-translational modification Phosphoserine; by host PKA. Disordered regions lie at residues 286–306 (RYLP…RSTL) and 318–342 (AVTE…KEPN). The Nuclear localization signal motif lies at 298 to 303 (KAKRQR).

Its subcellular location is the host cytoplasm. Its function is as follows. This transforming protein appears to have a protein-kinase activity. This is Transforming protein rel polyprotein (V-REL) from Galliformes.